Consider the following 302-residue polypeptide: Tyrosine--tRNA ligase 2 (302 aa).

Tyrosine 33 contacts L-tyrosine. The 'HIGH' region motif lies at 38 to 47 (PTADSLHLGH). L-tyrosine is bound by residues tyrosine 160 and glutamine 164. A 'KMSKS' region motif is present at residues 220-224 (KFGKS). Position 223 (lysine 223) interacts with ATP.

Belongs to the class-I aminoacyl-tRNA synthetase family. TyrS type 1 subfamily. As to quaternary structure, homodimer.

It is found in the cytoplasm. The catalysed reaction is tRNA(Tyr) + L-tyrosine + ATP = L-tyrosyl-tRNA(Tyr) + AMP + diphosphate + H(+). Catalyzes the attachment of tyrosine to tRNA(Tyr) in a two-step reaction: tyrosine is first activated by ATP to form Tyr-AMP and then transferred to the acceptor end of tRNA(Tyr). This chain is Tyrosine--tRNA ligase 2 (tyrS2), found in Streptococcus thermophilus (strain CNRZ 1066).